A 478-amino-acid chain; its full sequence is MSFKTIVGLEIHVQLMTKTKAFCSCRADVFDLPPNTAICPVCTGQPGALPTVNSTMIDYAIKIALALNCNIHEYSRFDRKNYFYPDLPKGYQITQYFYPIATSGYMDIDVDGQTKRIRIRRLHIEEDAGKLIHEGDSITQAQYSLVDMNRCGVPLVEIVTEPDLSSPKEARIFVEKLRSILRYLEVSSGDMEKGALRCDANISIYDESAHLQSNRVEVKNMNSFRFIEKALEYEQQRIIEALKNNEDVEKETRGWDIATKMTVSMRGKEEESDYRYFPEPDIPPVIVPVERIEEIKRSLVELPDEKIERFVSVYGIPKYDATVLAMNKEIADFYEACVREIDKPKEISNWIMTEMLREMKSLESENITITPAHLCELFRLMEKGEISMKIAKEVFPTVFRTGKMPGEIIKERGLKQISDENLLENIVKKVLEDNPKAVEQYKSGKTGVIGFFVGQVMKETKGAANPQVVNKIIKQILG.

This sequence belongs to the GatB/GatE family. GatB subfamily. In terms of assembly, heterotrimer of A, B and C subunits.

It carries out the reaction L-glutamyl-tRNA(Gln) + L-glutamine + ATP + H2O = L-glutaminyl-tRNA(Gln) + L-glutamate + ADP + phosphate + H(+). It catalyses the reaction L-aspartyl-tRNA(Asn) + L-glutamine + ATP + H2O = L-asparaginyl-tRNA(Asn) + L-glutamate + ADP + phosphate + 2 H(+). Its function is as follows. Allows the formation of correctly charged Asn-tRNA(Asn) or Gln-tRNA(Gln) through the transamidation of misacylated Asp-tRNA(Asn) or Glu-tRNA(Gln) in organisms which lack either or both of asparaginyl-tRNA or glutaminyl-tRNA synthetases. The reaction takes place in the presence of glutamine and ATP through an activated phospho-Asp-tRNA(Asn) or phospho-Glu-tRNA(Gln). The chain is Aspartyl/glutamyl-tRNA(Asn/Gln) amidotransferase subunit B from Pseudothermotoga lettingae (strain ATCC BAA-301 / DSM 14385 / NBRC 107922 / TMO) (Thermotoga lettingae).